Reading from the N-terminus, the 316-residue chain is D-alanine--D-alanine ligase (316 aa).

The ATP-grasp domain maps to 112 to 310 (KTALKAHGLP…FGKLCRWLVE (199 aa)). 139–189 (MATPYVVKPNNEGSSVGVYLVNEAANGPPHLSDDMPDEVMVETYAPGRELT) contacts ATP. 3 residues coordinate Mg(2+): aspartate 261, glutamate 277, and asparagine 279.

This sequence belongs to the D-alanine--D-alanine ligase family. It depends on Mg(2+) as a cofactor. Requires Mn(2+) as cofactor.

Its subcellular location is the cytoplasm. It carries out the reaction 2 D-alanine + ATP = D-alanyl-D-alanine + ADP + phosphate + H(+). It functions in the pathway cell wall biogenesis; peptidoglycan biosynthesis. Cell wall formation. This is D-alanine--D-alanine ligase from Jannaschia sp. (strain CCS1).